The chain runs to 127 residues: Urotensin-2 (127 aa).

Residues 1 to 16 form the signal peptide; that stretch reads MSKLFFCCLILAGSFC. Residues 17–111 constitute a propeptide that is removed on maturation; that stretch reads SFRSLPIIVP…RLQSKDRKQF (95 aa). Cys-121 and Cys-126 are joined by a disulfide.

It belongs to the urotensin-2 family. Central nervous system. Spinal cord.

Its subcellular location is the secreted. Functionally, involved in smooth muscle stimulating and ion mobilizing activities. It has a suggested role as a corticotropin-releasing factor. This is Urotensin-2 (UTS2) from Pelophylax ridibundus (Marsh frog).